The sequence spans 378 residues: Transmembrane 6 superfamily member 2 (378 aa).

9 helical membrane passes run leucine 34 to leucine 54, proline 63 to leucine 83, isoleucine 110 to alanine 130, leucine 140 to isoleucine 160, proline 170 to phenylalanine 190, leucine 219 to valine 239, methionine 269 to phenylalanine 289, glycine 291 to phenylalanine 311, and threonine 332 to leucine 352. EXPERA domains are found at residues tyrosine 61–glycine 186 and alanine 217–alanine 351.

The protein belongs to the TM6SF family.

Its subcellular location is the endoplasmic reticulum membrane. It is found in the endoplasmic reticulum-Golgi intermediate compartment membrane. Regulator of liver fat metabolism influencing triglyceride secretion and hepatic lipid droplet content. May function as sterol isomerase. The chain is Transmembrane 6 superfamily member 2 (Tm6sf2) from Rattus norvegicus (Rat).